The sequence spans 446 residues: Tubulin beta chain (446 aa).

The GTP site is built by Gln11, Glu69, Ser138, Gly142, Thr143, Gly144, Asn204, and Asn226. Glu69 is a Mg(2+) binding site. The tract at residues 423–446 (QQYQDAGVDEEEEEYEEEPLPEDE) is disordered. Positions 429-446 (GVDEEEEEYEEEPLPEDE) are enriched in acidic residues.

This sequence belongs to the tubulin family. As to quaternary structure, dimer of alpha and beta chains. A typical microtubule is a hollow water-filled tube with an outer diameter of 25 nm and an inner diameter of 15 nM. Alpha-beta heterodimers associate head-to-tail to form protofilaments running lengthwise along the microtubule wall with the beta-tubulin subunit facing the microtubule plus end conferring a structural polarity. Microtubules usually have 13 protofilaments but different protofilament numbers can be found in some organisms and specialized cells. Requires Mg(2+) as cofactor.

The protein localises to the cytoplasm. The protein resides in the cytoskeleton. In terms of biological role, tubulin is the major constituent of microtubules, a cylinder consisting of laterally associated linear protofilaments composed of alpha- and beta-tubulin heterodimers. Microtubules grow by the addition of GTP-tubulin dimers to the microtubule end, where a stabilizing cap forms. Below the cap, tubulin dimers are in GDP-bound state, owing to GTPase activity of alpha-tubulin. This Pestalotiopsis microspora protein is Tubulin beta chain (TUBB).